Consider the following 152-residue polypeptide: Transcriptional regulator MraZ (152 aa).

2 consecutive SpoVT-AbrB domains span residues 5 to 52 (ATTL…PLPE) and 81 to 124 (ADDC…NEDA).

Belongs to the MraZ family. In terms of assembly, forms oligomers.

The protein resides in the cytoplasm. Its subcellular location is the nucleoid. The polypeptide is Transcriptional regulator MraZ (Idiomarina loihiensis (strain ATCC BAA-735 / DSM 15497 / L2-TR)).